The primary structure comprises 260 residues: uncharacterized protein (260 aa).

Residues 214-252 adopt a coiled-coil conformation; sequence IHQFIETEIERIMEAAKELKAEKKDMTSELNRLLLNTVE.

This is an uncharacterized protein from Bacillus subtilis (strain 168).